The sequence spans 136 residues: Small ribosomal subunit protein uS11c (136 aa).

Belongs to the universal ribosomal protein uS11 family. As to quaternary structure, part of the 30S ribosomal subunit.

Its subcellular location is the plastid. It localises to the chloroplast. The chain is Small ribosomal subunit protein uS11c from Helianthus annuus (Common sunflower).